A 291-amino-acid chain; its full sequence is Phytanoyl-CoA dioxygenase domain-containing protein 1 (291 aa).

Residue Thr-55 is modified to Phosphothreonine. 2-oxoglutarate contacts are provided by residues Lys-102, Met-141, 156–158 (HQD), and Trp-174. Positions 156 and 158 each coordinate Fe cation. Residue His-246 participates in Fe cation binding. 2-oxoglutarate is bound by residues Ser-248 and Arg-257.

Belongs to the PhyH family. PHYHD1 subfamily. Fe cation serves as cofactor.

Functionally, 2-oxoglutarate(2OG)-dependent dioxygenase that catalyzes the conversion of 2-oxoglutarate to succinate and CO(2) in an iron-dependent manner. However, does not couple 2OG turnover to the hydroxylation of acyl-coenzyme A derivatives, implying that it is not directly involved in phytanoyl coenzyme-A metabolism. Does not show detectable activity towards fatty acid CoA thioesters. This is Phytanoyl-CoA dioxygenase domain-containing protein 1 from Mus musculus (Mouse).